The sequence spans 677 residues: MGRHSKPDPEDSVDDLSDGHAAEQQHWEDISGSYDYPGVDQPDDGPLSSEGHYSAVGGYSASGSEDYPDIPPRPDWEPTGAEPIAAAPPPLFRFGHRGPGDWQAGHRSADGRRGVSIGVIVALVAVVVMVAGVILWRFFGDALSNRSHTAAARCVGGKDTVAVIADPSIADQVKESADSYNASAGPVGDRCVAVAVTSAGSDAVINGFIGKWPTELGGQPGLWIPSSSISAARLTGAAGSQAISDSRSLVISPVLLAVRPELQQALANQNWAALPGLQTNPNSLSGLDLPAWGSLRLAMPSSGNGDAAYLAGEAVAAASAPAGAPATAGIGAVRTLMGARPKLADDSLTAAMDTLLKPGDVATAPVHAVVTTEQQLFQRGQSLSDAENTLGSWLPPGPAAVADYPTVLLSGAWLSQEQTSAASAFARYLHKPEQLAKLARAGFRVSDVKPPSSPVTSFPALPSTLSVGDDSMRATLADTMVTASAGVAATIMLDQSMPNDEGGNSRLSNVVAALENRIKAMPPSSVVGLWTFDGREGRTEVPAGPLADPVNGQPRPAALTAALGKQYSSGGGAVSFTTLRLIYQEMLANYRVGQANSVLVITAGPHTDQTLDGPGLQDFIRKSADPAKPIAVNIIDFGADPDRATWEAVAQLSGGSYQNLETSASPDLATAVNIFLS.

The tract at residues 1-87 (MGRHSKPDPE…PTGAEPIAAA (87 aa)) is disordered. The segment covering 17-29 (SDGHAAEQQHWED) has biased composition (basic and acidic residues). Positions 51–64 (GHYSAVGGYSASGS) are enriched in low complexity. 4 helical membrane-spanning segments follow: residues 115-135 (VSIGVIVALVAVVVMVAGVIL), 192-212 (VAVAVTSAGSDAVINGFIGKW), 313-333 (EAVAAASAPAGAPATAGIGAV), and 474-494 (ATLADTMVTASAGVAATIMLD).

The protein resides in the cell membrane. This is an uncharacterized protein from Mycobacterium tuberculosis (strain CDC 1551 / Oshkosh).